We begin with the raw amino-acid sequence, 237 residues long: Chalcone--flavanone isomerase 1 (237 aa).

Residues threonine 48, asparagine 113, and serine 190 each contribute to the substrate site.

Belongs to the chalcone isomerase family.

It carries out the reaction a chalcone = a flavanone.. It participates in secondary metabolite biosynthesis; flavonoid biosynthesis. In terms of biological role, catalyzes the intramolecular cyclization of bicyclic chalcones into tricyclic (S)-flavanones. Responsible for the isomerization of 4,2',4',6'-tetrahydroxychalcone (also termed chalcone) into naringenin. The chain is Chalcone--flavanone isomerase 1 (CHI1) from Fragaria ananassa (Strawberry).